The primary structure comprises 358 residues: Variant-surface-glycoprotein phospholipase C (358 aa).

One can recognise a PI-PLC X-box domain in the interval 25–198; it reads IGQVYMVGAH…STRRIFLVVR (174 aa).

Monomer. In terms of processing, the N-terminus is blocked.

The protein resides in the membrane. The catalysed reaction is a 6-(alpha-D-glucosaminyl)-1-(1,2-diacyl-sn-glycero-3-phospho)-1D-myo-inositol = 6-(alpha-D-glucosaminyl)-1D-myo-inositol 1,2-cyclic phosphate + a 1,2-diacyl-sn-glycerol. Its function is as follows. By hydrolysis of the attached glycolipid, releases soluble variant surface glycoprotein containing phosphoinositol from the cell wall of T.brucei after cell lysis. It also cleaves similar membrane anchors on some mammalian proteins. VSG lipase may play a role in processes such as parasite differentiation or antigenic variation. This chain is Variant-surface-glycoprotein phospholipase C, found in Trypanosoma brucei brucei.